Reading from the N-terminus, the 193-residue chain is Putative deoxynucleotide monophosphate kinase (193 aa).

K10 lines the dGMP pocket. Positions 13 and 16 each coordinate ATP. Residues L36, K37, K58, D122, R124, E128, and S155 each contribute to the dGMP site.

The protein belongs to the dNMP kinase family.

It catalyses the reaction a 2'-deoxyribonucleoside 5'-phosphate + ATP = a 2'-deoxyribonucleoside 5'-diphosphate + ADP. The protein is Putative deoxynucleotide monophosphate kinase of Acanthamoeba polyphaga mimivirus (APMV).